The following is a 342-amino-acid chain: Outer membrane porin C (342 aa).

Belongs to the Gram-negative porin family. In terms of assembly, homotrimer.

The protein resides in the cell outer membrane. Its function is as follows. Forms pores that allow passive diffusion of small molecules across the outer membrane. In R.aquatilis OmpC is involved in the adhesion to wheat roots. In Rahnella aquatilis, this protein is Outer membrane porin C (ompC).